Consider the following 462-residue polypeptide: Arginine biosynthesis bifunctional protein ArgJ, mitochondrial (462 aa).

Residues Thr189, Lys215, Thr236, Glu327, Asn457, and Ser462 each coordinate substrate. Residue Thr236 is the Nucleophile of the active site.

It belongs to the ArgJ family. In terms of assembly, heterodimer of an alpha and a beta chain. Post-translationally, the alpha and beta chains are autoproteolytically processed from a single precursor protein within the mitochondrion.

The protein resides in the mitochondrion matrix. The enzyme catalyses N(2)-acetyl-L-ornithine + L-glutamate = N-acetyl-L-glutamate + L-ornithine. It carries out the reaction L-glutamate + acetyl-CoA = N-acetyl-L-glutamate + CoA + H(+). It participates in amino-acid biosynthesis; L-arginine biosynthesis; L-ornithine and N-acetyl-L-glutamate from L-glutamate and N(2)-acetyl-L-ornithine (cyclic): step 1/1. Its pathway is amino-acid biosynthesis; L-arginine biosynthesis; N(2)-acetyl-L-ornithine from L-glutamate: step 1/4. Functionally, catalyzes two activities which are involved in the cyclic version of arginine biosynthesis: the synthesis of acetylglutamate from glutamate and acetyl-CoA, and of ornithine by transacetylation between acetylornithine and glutamate. The protein is Arginine biosynthesis bifunctional protein ArgJ, mitochondrial of Postia placenta (strain ATCC 44394 / Madison 698-R) (Brown rot fungus).